The following is a 236-amino-acid chain: Adenylate dimethylallyltransferase (236 aa).

It belongs to the isopentenyl transferase family.

The catalysed reaction is dimethylallyl diphosphate + AMP = N(6)-(dimethylallyl)adenosine 5'-phosphate + diphosphate. Functionally, transfers dimethylallyl groups to AMP as part of the biosynthesis of cytokinin phytohormones. This chain is Adenylate dimethylallyltransferase (ipt), found in Allorhizobium ampelinum (strain ATCC BAA-846 / DSM 112012 / S4) (Agrobacterium vitis (strain S4)).